A 287-amino-acid chain; its full sequence is Hydroxyethylthiazole kinase (287 aa).

Methionine 50 is a substrate binding site. Positions 126 and 185 each coordinate ATP. Glycine 212 is a binding site for substrate.

The protein belongs to the Thz kinase family. The cofactor is Mg(2+).

The enzyme catalyses 5-(2-hydroxyethyl)-4-methylthiazole + ATP = 4-methyl-5-(2-phosphooxyethyl)-thiazole + ADP + H(+). It participates in cofactor biosynthesis; thiamine diphosphate biosynthesis; 4-methyl-5-(2-phosphoethyl)-thiazole from 5-(2-hydroxyethyl)-4-methylthiazole: step 1/1. In terms of biological role, catalyzes the phosphorylation of the hydroxyl group of 4-methyl-5-beta-hydroxyethylthiazole (THZ). This Methanobrevibacter smithii (strain ATCC 35061 / DSM 861 / OCM 144 / PS) protein is Hydroxyethylthiazole kinase.